A 348-amino-acid polypeptide reads, in one-letter code: Thioesterase-like protein TwmA (348 aa).

It functions in the pathway secondary metabolite biosynthesis. Functionally, thioesterase-like protein; part of the gene cluster that mediates the biosynthesis of wortmanamides A and B, reduced long-chain polyketides amidated with a specific omega-amino acid, 5-aminopentanoic acid (5PA). The PKS modules of TwmB are involved in the synthesis of the polyketide backbone, whereas the non-canonical C domain of TwmB is a bonafide condensation domain that specifically selects 5PA and catalyzes amidation to release polyketide chain. The C domain clearly prefers C16 and C18 fatty acyl substrates, which is consistent with simultaneous formation of both octaketide and nonaketide acyl amides wortmanamides A and B. Because TwmB lacks a designated enoylreductase (ER) domain, the required activity is provided the enoyl reductase TwmE. The roles of the remaining enzymes have still to be clarified. The protein is Thioesterase-like protein TwmA of Talaromyces wortmannii (Penicillium wortmannii).